We begin with the raw amino-acid sequence, 172 residues long: Major exported protein (172 aa).

Belongs to the hcp1 family.

It localises to the secreted. In Pseudomonas aeruginosa (strain ATCC 15692 / DSM 22644 / CIP 104116 / JCM 14847 / LMG 12228 / 1C / PRS 101 / PAO1), this protein is Major exported protein (hcpA).